The chain runs to 676 residues: Forkhead box protein biniou (676 aa).

5 disordered regions span residues 22–50 (YHDP…GHPY), 131–160 (AHSA…SSST), 203–232 (QEQA…SRIS), 249–312 (NYSS…PEKP), and 583–651 (IQHA…AYLP). Basic residues predominate over residues 34 to 48 (PHAHSHPHQHTHTGH). The span at 133–160 (SAGSASPQSNSKTPTDLPQDLQYASSST) shows a compositional bias: polar residues. Over residues 203–220 (QEQAGQQQPQQLPAQQLQ) the composition is skewed to low complexity. Over residues 257 to 273 (PAKSLNGSESSPPSQNH) the composition is skewed to polar residues. Positions 311–408 (KPALSYINMI…DEGSLRRRPR (98 aa)) form a DNA-binding region, fork-head. The segment covering 583 to 593 (IQHAQAQAQAQ) has biased composition (low complexity). Basic residues predominate over residues 594 to 611 (AHHHHHQHHASHPSHSHQ). The span at 612–625 (GHGSMHQNHGTSST) shows a compositional bias: low complexity. Residues 637–647 (GIDHSPIDRKP) show a composition bias toward basic and acidic residues.

Binds to DNA. In terms of tissue distribution, in embryo, expressed in all types of visceral muscles and their progenitors (at protein level). In late stage 10 embryo, expressed in the caudal visceral mesoderm and trunk and hindgut visceral mesoderm progenitors.

The protein localises to the nucleus. In terms of biological role, component of a regulatory network controlling visceral mesoderm development and midgut morphogenesis. Transcriptional regulator involved in the activation of a large number of genes in the visceral mesoderm including betaTub60D, dpp and Hand. Binds to and regulates a number of enhancers driving expression in the visceral mesoderm in a temporally and spatially restricted manner. Also to binds to enhancers cooperatively with activators, such as bap or HLH54F, to coregulate expression of shared target genes in the visceral mesoderm. Binds to the Ndg enhancer and drives expression of Ndg in the late visceral musculature. May be involved in the transcriptional regulation of wupA in the visceral mesoderm. Plays an indirect role in the later stages of salivary gland positioning. This chain is Forkhead box protein biniou (bin), found in Drosophila melanogaster (Fruit fly).